The chain runs to 293 residues: Proximal tail tube connector protein (293 aa).

Disordered regions lie at residues 106-166 and 192-240; these read VGVK…FKRD and QIEE…NDKL. Over residues 112 to 126 the composition is skewed to basic and acidic residues; that stretch reads TKNDTDRNDNRDVKQ. The segment covering 127 to 160 has biased composition (polar residues); the sequence is DLTSNGTSSTDAKQNDTSKTTGNEKSSGSGSITD. A compositionally biased stretch (basic and acidic residues) spans 193 to 205; the sequence is IEEHNENKKRDTK. Residues 206 to 231 are compositionally biased toward low complexity; sequence TSNTTDTTSNTTGTSTLDSDSKTSNK.

This sequence belongs to the phi29likevirus proximal tail tube connector protein family.

It localises to the virion. Functionally, forms the proximal part of the tail tube. The sequence is that of Proximal tail tube connector protein (11) from Bacillus phage PZA (Bacteriophage PZA).